The following is a 350-amino-acid chain: tRNA-splicing endonuclease (350 aa).

Residues Y286, H297, and K328 contribute to the active site.

Belongs to the tRNA-intron endonuclease family. Archaeal long subfamily. As to quaternary structure, homodimer.

The catalysed reaction is pretRNA = a 3'-half-tRNA molecule with a 5'-OH end + a 5'-half-tRNA molecule with a 2',3'-cyclic phosphate end + an intron with a 2',3'-cyclic phosphate and a 5'-hydroxyl terminus.. Endonuclease that removes tRNA introns. Cleaves pre-tRNA at the 5'- and 3'-splice sites to release the intron. The products are an intron and two tRNA half-molecules bearing 2',3' cyclic phosphate and 5'-OH termini. Recognizes a pseudosymmetric substrate in which 2 bulged loops of 3 bases are separated by a stem of 4 bp. The polypeptide is tRNA-splicing endonuclease (Methanosarcina barkeri (strain Fusaro / DSM 804)).